Reading from the N-terminus, the 159-residue chain is Ribosomal RNA large subunit methyltransferase H (159 aa).

S-adenosyl-L-methionine contacts are provided by residues Leu-76, Gly-108, and 127 to 132 (FSKMTF).

Belongs to the RNA methyltransferase RlmH family. Homodimer.

The protein localises to the cytoplasm. It catalyses the reaction pseudouridine(1915) in 23S rRNA + S-adenosyl-L-methionine = N(3)-methylpseudouridine(1915) in 23S rRNA + S-adenosyl-L-homocysteine + H(+). Its function is as follows. Specifically methylates the pseudouridine at position 1915 (m3Psi1915) in 23S rRNA. The sequence is that of Ribosomal RNA large subunit methyltransferase H from Bifidobacterium animalis subsp. lactis (strain AD011).